A 340-amino-acid chain; its full sequence is Protein-arginine kinase (340 aa).

Residues 21-242 form the Phosphagen kinase C-terminal domain; it reads VVLSSRIRLA…EQIIMQERIA (222 aa). ATP is bound by residues 24–28, histidine 79, arginine 113, 164–168, and 195–200; these read SSRIR, RASVM, and RGIYGE.

This sequence belongs to the ATP:guanido phosphotransferase family.

The enzyme catalyses L-arginyl-[protein] + ATP = N(omega)-phospho-L-arginyl-[protein] + ADP + H(+). Functionally, catalyzes the specific phosphorylation of arginine residues in proteins. This is Protein-arginine kinase from Listeria monocytogenes serotype 4a (strain HCC23).